A 61-amino-acid polypeptide reads, in one-letter code: Double gene block protein 1 (61 aa).

Positions 15–45 are disordered; the sequence is LAGNRGKQKTRRSVAKDAIRKPASDSTNGGN. Residues 17–35 are RNA-binding; it reads GNRGKQKTRRSVAKDAIRK. Over residues 28-37 the composition is skewed to basic and acidic residues; the sequence is VAKDAIRKPA.

The protein belongs to the carmovirus double gene block protein 1 family. In terms of assembly, homodimer.

In terms of biological role, cell-to-cell movement. Displays RNA-binding activity. The sequence is that of Double gene block protein 1 from Carnation mottle virus (isolate China/Shanghai) (CarMV).